A 429-amino-acid chain; its full sequence is Autophagy-related protein 18 (429 aa).

WD repeat units lie at residues 1 to 36 (MTMN…KSYE), 69 to 114 (KRQS…LLYT), 139 to 182 (PLPQ…AINV), 185 to 225 (AHRS…KLYQ), 230 to 269 (SIPS…QLQE), 309 to 355 (KHNG…AWIK), and 367 to 407 (ANTG…GGEG). A L/FRRG motif motif is present at residues 226–230 (FRRGS). The segment at 267 to 309 (LQETSSANTSSTGRRRSLSSLSQSPEREATEEDNGSSDLASRK) is disordered.

This sequence belongs to the WD repeat PROPPIN family. As to quaternary structure, component of the PI(3,5)P2 regulatory complex.

It is found in the preautophagosomal structure membrane. The protein localises to the vacuole membrane. It localises to the endosome membrane. The PI(3,5)P2 regulatory complex regulates both the synthesis and turnover of phosphatidylinositol 3,5-bisphosphate (PtdIns(3,5)P2). Necessary for proper vacuole morphology. Plays an important role in osmotically-induced vacuole fragmentation. Required for cytoplasm to vacuole transport (Cvt) vesicle formation, pexophagy and starvation-induced autophagy. Involved in correct ATG9 trafficking to the pre-autophagosomal structure. Might also be involved in premeiotic DNA replication. This is Autophagy-related protein 18 (atg18) from Emericella nidulans (strain FGSC A4 / ATCC 38163 / CBS 112.46 / NRRL 194 / M139) (Aspergillus nidulans).